A 341-amino-acid polypeptide reads, in one-letter code: MEPAFGEVNQLGGVFVNGRPLPNAIRLRIVELAQLGIRPCDISRQLRVSHGCVSKILARYNETGSILPGAIGGSKPRVTTPTVVKHIRTYKQRDPGIFAWEIRDRLLADGVCDKYNVPSVSSISRILRNKIGNLAQQGHYDSYKQHQPAPQPALPYNHIYSYPSPISAAAAKVPTPPGVPAIPGSVAMPRTWPSSHSVTDILGIRSITDQVSDSSPYHSPKVEEWSSLGRNNFPAAAPHAVNGLEKGALEQEAKYGQAPNGLPAVSSFVSASSMAPYPTPAQVSPYMTYSAAPSGYVAGHGWQHAGGTPLSPHNCDIPASLAFKGMQAAREGSHSVTASAL.

Residues 4–130 (AFGEVNQLGG…SSISRILRNK (127 aa)) constitute a DNA-binding region (paired). Positions 7–63 (EVNQLGGVFVNGRPLPNAIRLRIVELAQLGIRPCDISRQLRVSHGCVSKILARYNET) are PAI subdomain. Residues 82–130 (TVVKHIRTYKQRDPGIFAWEIRDRLLADGVCDKYNVPSVSSISRILRNK) are RED subdomain. Positions 168 to 189 (AAAAKVPTPPGVPAIPGSVAMP) are interaction with KDM5B.

As to quaternary structure, interacts with KDM5B.

The protein resides in the nucleus. Transcription factor required for normal development of thymus, parathyroid glands, ultimobranchial bodies, teeth, skeletal elements of skull and larynx as well as distal limbs. This chain is Paired box protein Pax-9 (PAX9), found in Perodicticus potto edwarsi (Potto).